The chain runs to 612 residues: Chaperone protein DnaK (612 aa).

At T173 the chain carries Phosphothreonine; by autocatalysis. A disordered region spans residues 576–612; that stretch reads AAKAQQAEGGANAEGKKADDNVVDAEYEEVKDDETKK. Residues 578 to 588 are compositionally biased toward low complexity; sequence KAQQAEGGANA. Residues 596 to 612 are compositionally biased toward acidic residues; it reads NVVDAEYEEVKDDETKK.

The protein belongs to the heat shock protein 70 family.

Its function is as follows. Acts as a chaperone. The sequence is that of Chaperone protein DnaK from Bacillus velezensis (strain DSM 23117 / BGSC 10A6 / LMG 26770 / FZB42) (Bacillus amyloliquefaciens subsp. plantarum).